The chain runs to 342 residues: L-threonine 3-dehydrogenase (342 aa).

Cysteine 38 provides a ligand contact to Zn(2+). Residues threonine 40 and histidine 43 each act as charge relay system in the active site. Histidine 63, glutamate 64, cysteine 93, cysteine 96, cysteine 99, and cysteine 107 together coordinate Zn(2+). Residues isoleucine 175, aspartate 195, arginine 200, 262-264 (LGI), and 286-287 (IY) each bind NAD(+).

Belongs to the zinc-containing alcohol dehydrogenase family. As to quaternary structure, homotetramer. It depends on Zn(2+) as a cofactor.

It is found in the cytoplasm. It catalyses the reaction L-threonine + NAD(+) = (2S)-2-amino-3-oxobutanoate + NADH + H(+). The protein operates within amino-acid degradation; L-threonine degradation via oxydo-reductase pathway; glycine from L-threonine: step 1/2. Its function is as follows. Catalyzes the NAD(+)-dependent oxidation of L-threonine to 2-amino-3-ketobutyrate. In Aeromonas hydrophila subsp. hydrophila (strain ATCC 7966 / DSM 30187 / BCRC 13018 / CCUG 14551 / JCM 1027 / KCTC 2358 / NCIMB 9240 / NCTC 8049), this protein is L-threonine 3-dehydrogenase.